Here is a 141-residue protein sequence, read N- to C-terminus: Cell division protein SepF (141 aa).

This sequence belongs to the SepF family. As to quaternary structure, homodimer. Interacts with FtsZ.

It is found in the cytoplasm. Functionally, cell division protein that is part of the divisome complex and is recruited early to the Z-ring. Probably stimulates Z-ring formation, perhaps through the cross-linking of FtsZ protofilaments. Its function overlaps with FtsA. The sequence is that of Cell division protein SepF from Anoxybacillus flavithermus (strain DSM 21510 / WK1).